The primary structure comprises 570 residues: Polypeptide N-acetylgalactosaminyltransferase 2 (570 aa).

Topologically, residues 1–6 are cytoplasmic; the sequence is MRRRSR. The chain crosses the membrane as a helical; Signal-anchor for type II membrane protein span at residues 7 to 24; that stretch reads MLLCFALLWVLGIAYYMY. At 25–570 the chain is on the lumenal side; it reads SGGGSALAAG…QWKFSLNLQQ (546 aa). Serine 29 carries O-linked (Xyl...) (chondroitin sulfate) serine glycosylation. 4 disulfides stabilise this stretch: cysteine 125/cysteine 353, cysteine 344/cysteine 422, cysteine 455/cysteine 472, and cysteine 495/cysteine 512. Residues 134-239 form a catalytic subdomain A region; the sequence is LPATSVVITF…ERWLEPLLER (106 aa). Positions 142, 175, and 200 each coordinate substrate. Aspartate 223 is a Mn(2+) binding site. Position 224 (serine 224) interacts with substrate. Position 225 (histidine 225) interacts with Mn(2+). Positions 299 to 361 are catalytic subdomain B; it reads PIKTPMIAGG…PCSRVGHVFR (63 aa). Tryptophan 330 serves as a coordination point for substrate. Mn(2+) is bound at residue histidine 358. Residues arginine 361, histidine 364, and tyrosine 366 each coordinate substrate. The region spanning 442-565 is the Ricin B-type lectin domain; it reads QDIAFGALQQ…PALSQQWKFS (124 aa). An N-linked (GlcNAc...) asparagine glycan is attached at asparagine 515. Serine 535 carries the post-translational modification Phosphoserine. Cysteine 538 and cysteine 554 form a disulfide bridge.

Belongs to the glycosyltransferase 2 family. GalNAc-T subfamily. Mn(2+) is required as a cofactor. Widely expressed at high level.

It localises to the golgi apparatus. It is found in the golgi stack membrane. The protein localises to the secreted. It catalyses the reaction L-seryl-[protein] + UDP-N-acetyl-alpha-D-galactosamine = a 3-O-[N-acetyl-alpha-D-galactosaminyl]-L-seryl-[protein] + UDP + H(+). The enzyme catalyses L-threonyl-[protein] + UDP-N-acetyl-alpha-D-galactosamine = a 3-O-[N-acetyl-alpha-D-galactosaminyl]-L-threonyl-[protein] + UDP + H(+). It functions in the pathway protein modification; protein glycosylation. Functionally, catalyzes the initial reaction in O-linked oligosaccharide biosynthesis, the transfer of an N-acetyl-D-galactosamine residue to a serine or threonine residue on the protein receptor. Has a broad spectrum of substrates for peptides such as EA2, Muc5AC, Muc1a, Muc1b. Probably involved in O-linked glycosylation of the immunoglobulin A1 (IgA1) hinge region. Involved in O-linked glycosylation of APOC-III, ANGPTL3 and PLTP. It participates in the regulation of HDL-C metabolism. The chain is Polypeptide N-acetylgalactosaminyltransferase 2 (Galnt2) from Mus musculus (Mouse).